The sequence spans 180 residues: NADH-quinone oxidoreductase subunit I (180 aa).

2 consecutive 4Fe-4S ferredoxin-type domains span residues 50-80 (LTRD…LQKA) and 90-119 (EFFR…LTPD). The [4Fe-4S] cluster site is built by cysteine 60, cysteine 63, cysteine 66, cysteine 70, cysteine 99, cysteine 102, cysteine 105, and cysteine 109.

It belongs to the complex I 23 kDa subunit family. As to quaternary structure, NDH-1 is composed of 13 different subunits. Subunits NuoA, H, J, K, L, M, N constitute the membrane sector of the complex. It depends on [4Fe-4S] cluster as a cofactor.

The protein resides in the cell inner membrane. It carries out the reaction a quinone + NADH + 5 H(+)(in) = a quinol + NAD(+) + 4 H(+)(out). In terms of biological role, NDH-1 shuttles electrons from NADH, via FMN and iron-sulfur (Fe-S) centers, to quinones in the respiratory chain. The immediate electron acceptor for the enzyme in this species is believed to be ubiquinone. Couples the redox reaction to proton translocation (for every two electrons transferred, four hydrogen ions are translocated across the cytoplasmic membrane), and thus conserves the redox energy in a proton gradient. This is NADH-quinone oxidoreductase subunit I from Shigella sonnei (strain Ss046).